Consider the following 475-residue polypeptide: Vitronectin (475 aa).

The first 19 residues, 1 to 19 (MAPLRPIFTLALLLWVVLA), serve as a signal peptide directing secretion. Residues 20 to 63 (DQESCKDRCTEGFNANRKCQCDELCSYYQSCCADYAAECKPQVT) enclose the SMB domain. 7 disulfide bridges follow: Cys-24-Cys-28, Cys-24-Cys-40, Cys-28-Cys-58, Cys-38-Cys-40, Cys-38-Cys-51, Cys-44-Cys-50, and Cys-51-Cys-58. Positions 64 to 66 (RGD) match the Cell attachment site motif. Position 69 is a phosphothreonine (Thr-69). A sulfotyrosine mark is found at Tyr-75, Tyr-78, and Tyr-80. The N-linked (GlcNAc...) asparagine glycan is linked to Asn-87. The tract at residues 87 to 123 (NASVHAQPESPTVGQEPTLSPDLQTEGGAEPTHEVPL) is disordered. The span at 95–109 (ESPTVGQEPTLSPDL) shows a compositional bias: polar residues. Hemopexin repeat units lie at residues 158–202 (GKPF…VWGI), 203–250 (EGPI…FSGI), and 251–305 (PDNV…FEHF). N-linked (GlcNAc...) asparagine glycosylation is found at Asn-169 and Asn-242. Tyr-279 and Tyr-282 each carry sulfotyrosine. Ser-312 bears the Phosphoserine mark. Residues 359-391 (LTPSPSAKKQKSRRRSRKRYRSRYGRGRSQNSR) are disordered. Positions 366–384 (KKQKSRRRSRKRYRSRYGR) are enriched in basic residues. The interval 366 to 392 (KKQKSRRRSRKRYRSRYGRGRSQNSRR) is glycosaminoglycan binding region. Ser-394 is subject to Phosphoserine. The stretch at 419–469 (TSWLKPATSEPIQSVYFFSGDKYYRVNLRTQRVDTVNPPYPRSIAQYWLGC) is one Hemopexin 4 repeat.

In terms of assembly, interacts with SERPINE1/PAI1 and C1QBP. Monomer. In terms of processing, sulfated on tyrosine residues. Post-translationally, N- and O-glycosylated. It has been suggested that the active SMB domain may be permitted considerable disulfide bond heterogeneity or variability, thus two alternate disulfide patterns based on 3D structures are described with 1 disulfide bond conserved in both. As to expression, plasma.

The protein localises to the secreted. It is found in the extracellular space. In terms of biological role, vitronectin is a cell adhesion and spreading factor found in serum and tissues. Vitronectin interact with glycosaminoglycans and proteoglycans. Is recognized by certain members of the integrin family and serves as a cell-to-substrate adhesion molecule. Inhibitor of the membrane-damaging effect of the terminal cytolytic complement pathway. This chain is Vitronectin (VTN), found in Oryctolagus cuniculus (Rabbit).